The primary structure comprises 138 residues: EFKEAFSLFDKDGDGTITTKELGTVMRSLGQNPTEAELQDMINEVDADGNGTIDFPEFLTMMARKMKETDSEEEIREAFRVFDKDGNGFISAAELRHVMTNLGEKLTDEEVDEMIREADIDGDGQVNYEEFVAMMTSK.

EF-hand domains lie at 1 to 32 (EFKE…LGQN), 33 to 68 (PTEA…KMKE), 70 to 105 (DSEE…LGEK), and 106 to 138 (LTDE…MTSK). Residues aspartate 10, aspartate 12, aspartate 14, threonine 16, glutamate 21, aspartate 46, aspartate 48, asparagine 50, threonine 52, glutamate 57, aspartate 83, aspartate 85, asparagine 87, glutamate 94, aspartate 119, aspartate 121, aspartate 123, glutamine 125, and glutamate 130 each contribute to the Ca(2+) site.

This sequence belongs to the calmodulin family.

Functionally, calmodulin mediates the control of a large number of enzymes, ion channels and other proteins by Ca(2+). Among the enzymes to be stimulated by the calmodulin-Ca(2+) complex are a number of protein kinases and phosphatases. The sequence is that of Calmodulin-beta from Arbacia punctulata (Punctuate sea urchin).